A 615-amino-acid polypeptide reads, in one-letter code: Medium-chain acyl-CoA ligase ACSF2, mitochondrial (615 aa).

The transit peptide at 1–41 directs the protein to the mitochondrion; sequence MAVYHGMLRFGRLCIASLGARGPRTLLSRPRPNSKLQSVRA. The residue at position 179 (Lys179) is an N6-acetyllysine. An N6-acetyllysine; alternate modification is found at Lys182. Lys182 carries the N6-succinyllysine; alternate modification. N6-acetyllysine is present on Lys199. An ATP-binding site is contributed by 263–271; it reads TSGTTGNPK. N6-acetyllysine is present on residues Lys340 and Lys398. An N6-succinyllysine modification is found at Lys478. Residues Asp493 and Arg508 each contribute to the ATP site. Lys510 is subject to N6-acetyllysine. N6-acetyllysine; alternate occurs at positions 544 and 570. N6-succinyllysine; alternate is present on residues Lys544 and Lys570. Position 599 (Lys599) interacts with ATP. Lys599 carries the N6-succinyllysine modification.

This sequence belongs to the ATP-dependent AMP-binding enzyme family.

It localises to the mitochondrion. It catalyses the reaction a medium-chain fatty acid + ATP + CoA = a medium-chain fatty acyl-CoA + AMP + diphosphate. The catalysed reaction is octanoate + ATP + CoA = octanoyl-CoA + AMP + diphosphate. Acyl-CoA synthases catalyze the initial reaction in fatty acid metabolism, by forming a thioester with CoA. Has some preference toward medium-chain substrates. Plays a role in adipocyte differentiation. The polypeptide is Medium-chain acyl-CoA ligase ACSF2, mitochondrial (Mus musculus (Mouse)).